The following is a 741-amino-acid chain: Subtilisin-like protease SBT4.4 (741 aa).

The signal sequence occupies residues 1 to 24 (MAKGTTFIFLFSSLLVLSLSSVSA). Positions 25-112 (DKDDHGDQQV…VFPSRKLKLQ (88 aa)) are cleaved as a propeptide — activation peptide. An Inhibitor I9 domain is found at 34-111 (VYIVYLGSLP…SVFPSRKLKL (78 aa)). The Peptidase S8 domain occupies 116 to 589 (SWNFMGLKEG…SGHVDPIDAI (474 aa)). The active-site Charge relay system is Asp144. Residues Asn175 and Asn195 are each glycosylated (N-linked (GlcNAc...) asparagine). Residue His204 is the Charge relay system of the active site. N-linked (GlcNAc...) asparagine glycans are attached at residues Asn227 and Asn357. Positions 359-445 (TNYPLVYGKS…LSNDDYKSLV (87 aa)) constitute a PA domain. Asn449 carries N-linked (GlcNAc...) asparagine glycosylation. Ser528 functions as the Charge relay system in the catalytic mechanism. Asn565, Asn610, Asn623, and Asn654 each carry an N-linked (GlcNAc...) asparagine glycan.

The protein belongs to the peptidase S8 family. In terms of processing, the C-terminal propeptide is autocleaved.

Its subcellular location is the secreted. In Arabidopsis thaliana (Mouse-ear cress), this protein is Subtilisin-like protease SBT4.4.